Consider the following 379-residue polypeptide: Probable pectin lyase B (379 aa).

The signal sequence occupies residues 1-20 (MHYKLLFAAAAASLASAVSA). 2 disulfides stabilise this stretch: C83–C102 and C92–C226. Residues N129 and N252 are each glycosylated (N-linked (GlcNAc...) asparagine). Residue R256 is part of the active site. C323 and C331 are oxidised to a cystine.

This sequence belongs to the polysaccharide lyase 1 family.

The protein resides in the secreted. The enzyme catalyses Eliminative cleavage of (1-&gt;4)-alpha-D-galacturonan methyl ester to give oligosaccharides with 4-deoxy-6-O-methyl-alpha-D-galact-4-enuronosyl groups at their non-reducing ends.. Its function is as follows. Pectinolytic enzymes consist of four classes of enzymes: pectin lyase, polygalacturonase, pectin methylesterase and rhamnogalacturonase. Among pectinolytic enzymes, pectin lyase is the most important in depolymerization of pectin, since it cleaves internal glycosidic bonds of highly methylated pectins. The polypeptide is Probable pectin lyase B (pelB) (Aspergillus niger (strain ATCC MYA-4892 / CBS 513.88 / FGSC A1513)).